We begin with the raw amino-acid sequence, 132 residues long: MCDQFVGTWKFLSSENFEDYMKELGVGFATRKMAGVAKPNVTISINGDVITIKTESTFKNTEVSFRLGEEFDETTADDRKTKNVITLDNGILNQVQKWDGKETVIKRKVMDGNLVVECTMNTVTSKRVYERA.

Residues 22–32 carry the Nuclear localization signal motif; it reads KELGVGFATRK. (9Z,12Z)-octadecadienoate contacts are provided by R107 and R127.

It belongs to the calycin superfamily. Fatty-acid binding protein (FABP) family. As to quaternary structure, monomer.

It localises to the cytoplasm. It is found in the nucleus. Functionally, lipid transport protein in adipocytes. Binds both long chain fatty acids and retinoic acid. Delivers long-chain fatty acids and retinoic acid to their cognate receptors in the nucleus. Has the highest binding affinity for linoleic acid and decreasing relative affinity for eicosapentaenoic acid (EPA), alpha-linolenic acid (ALA), docosahexaenoic acid (DHA), oleic acid, palmitic acid and stearic acid, respectively. The protein is Fatty acid-binding protein, adipocyte of Pygoscelis papua (Gentoo penguin).